The chain runs to 514 residues: Acetylcholine receptor subunit gamma (514 aa).

The signal sequence occupies residues 1-22 (MRCSDLLLLFLLALCVLPGISC). The Extracellular portion of the chain corresponds to 23-241 (RNQEEKLLQD…VIFYLIIQRK (219 aa)). An intrachain disulfide couples C150 to C164. N-linked (GlcNAc...) asparagine glycosylation occurs at N163. 3 helical membrane passes run 242 to 266 (PLFY…VYFL), 275 to 293 (CTVS…FLIA), and 309 to 330 (YLTF…VLNV). The Cytoplasmic portion of the chain corresponds to 331-473 (SLRTPNTHSM…WILVGRVIDR (143 aa)). A Phosphotyrosine; by Tyr-kinases modification is found at Y386. Residues 474 to 494 (VCFFIMASLFVCGTIGIFLMA) traverse the membrane as a helical segment.

It belongs to the ligand-gated ion channel (TC 1.A.9) family. Acetylcholine receptor (TC 1.A.9.1) subfamily. Gamma/CHRNG sub-subfamily. As to quaternary structure, pentamer of two alpha chains, and one each of the beta, delta, and gamma chains.

Its subcellular location is the postsynaptic cell membrane. It is found in the cell membrane. It catalyses the reaction K(+)(in) = K(+)(out). It carries out the reaction Na(+)(in) = Na(+)(out). In terms of biological role, after binding acetylcholine, the AChR responds by an extensive change in conformation that affects all subunits and leads to opening of an ion-conducting channel across the plasma membrane. This is Acetylcholine receptor subunit gamma (CHRNG) from Gallus gallus (Chicken).